We begin with the raw amino-acid sequence, 570 residues long: Sulfite reductase [NADPH] hemoprotein beta-component (570 aa).

[4Fe-4S] cluster contacts are provided by Cys-434, Cys-440, Cys-479, and Cys-483. Cys-483 serves as a coordination point for siroheme.

This sequence belongs to the nitrite and sulfite reductase 4Fe-4S domain family. Alpha(8)-beta(8). The alpha component is a flavoprotein, the beta component is a hemoprotein. Requires siroheme as cofactor. [4Fe-4S] cluster serves as cofactor.

It carries out the reaction hydrogen sulfide + 3 NADP(+) + 3 H2O = sulfite + 3 NADPH + 4 H(+). Its pathway is sulfur metabolism; hydrogen sulfide biosynthesis; hydrogen sulfide from sulfite (NADPH route): step 1/1. In terms of biological role, component of the sulfite reductase complex that catalyzes the 6-electron reduction of sulfite to sulfide. This is one of several activities required for the biosynthesis of L-cysteine from sulfate. This chain is Sulfite reductase [NADPH] hemoprotein beta-component, found in Escherichia coli (strain SMS-3-5 / SECEC).